Here is a 238-residue protein sequence, read N- to C-terminus: Ribonuclease PH (238 aa).

Phosphate-binding positions include R86 and 124-126; that span reads GTR.

This sequence belongs to the RNase PH family. As to quaternary structure, homohexameric ring arranged as a trimer of dimers.

It carries out the reaction tRNA(n+1) + phosphate = tRNA(n) + a ribonucleoside 5'-diphosphate. Its function is as follows. Phosphorolytic 3'-5' exoribonuclease that plays an important role in tRNA 3'-end maturation. Removes nucleotide residues following the 3'-CCA terminus of tRNAs; can also add nucleotides to the ends of RNA molecules by using nucleoside diphosphates as substrates, but this may not be physiologically important. Probably plays a role in initiation of 16S rRNA degradation (leading to ribosome degradation) during starvation. In Pasteurella multocida (strain Pm70), this protein is Ribonuclease PH.